The primary structure comprises 308 residues: Ribosome maturation factor RimP (308 aa).

Disordered regions lie at residues 1–31 (MARA…AADA), 94–113 (EDIG…AAGG), and 249–308 (DLDE…EMNR). The span at 17-31 (APSRRTGGARAAADA) shows a compositional bias: low complexity. Positions 99–113 (DGAGGTGGSGGAAGG) are enriched in gly residues. Acidic residues predominate over residues 249 to 269 (DLDEGLEDDDGLEDEDDEDEY).

It belongs to the RimP family.

It localises to the cytoplasm. In terms of biological role, required for maturation of 30S ribosomal subunits. In Parafrankia sp. (strain EAN1pec), this protein is Ribosome maturation factor RimP.